The chain runs to 406 residues: Peptidase T (406 aa).

His82 lines the Zn(2+) pocket. The active site involves Asp84. Residue Asp142 coordinates Zn(2+). The active-site Proton acceptor is the Glu176. The Zn(2+) site is built by Glu177, Asp199, and His381.

The protein belongs to the peptidase M20B family. Zn(2+) serves as cofactor.

Its subcellular location is the cytoplasm. The catalysed reaction is Release of the N-terminal residue from a tripeptide.. In terms of biological role, cleaves the N-terminal amino acid of tripeptides. This chain is Peptidase T, found in Streptococcus agalactiae serotype III (strain NEM316).